The chain runs to 239 residues: Uridylate kinase (239 aa).

ATP is bound at residue 13-16 (KLSG). Residue G55 participates in UMP binding. ATP-binding residues include G56 and R60. Residues D75 and 136–143 (TGNPFFTT) contribute to the UMP site. ATP-binding residues include T163, N164, Y169, and D172.

It belongs to the UMP kinase family. Homohexamer.

The protein resides in the cytoplasm. It catalyses the reaction UMP + ATP = UDP + ADP. The protein operates within pyrimidine metabolism; CTP biosynthesis via de novo pathway; UDP from UMP (UMPK route): step 1/1. Inhibited by UTP. Catalyzes the reversible phosphorylation of UMP to UDP. The protein is Uridylate kinase of Neisseria meningitidis serogroup A / serotype 4A (strain DSM 15465 / Z2491).